The primary structure comprises 200 residues: Phosphoheptose isomerase (200 aa).

The SIS domain maps to 37–199 (VLGCITAGGK…DVQLLGEQDL (163 aa)). Substrate is bound at residue 52–54 (NGG). Zn(2+) is bound by residues His-61 and Glu-65. Residues Glu-65, 94 to 95 (ND), 120 to 122 (TTS), Ser-125, and Gln-175 contribute to the substrate site. Zn(2+) contacts are provided by Gln-175 and His-183.

The protein belongs to the SIS family. GmhA subfamily. As to quaternary structure, homotetramer. It depends on Zn(2+) as a cofactor.

It is found in the cytoplasm. It carries out the reaction 2 D-sedoheptulose 7-phosphate = D-glycero-alpha-D-manno-heptose 7-phosphate + D-glycero-beta-D-manno-heptose 7-phosphate. It functions in the pathway carbohydrate biosynthesis; D-glycero-D-manno-heptose 7-phosphate biosynthesis; D-glycero-alpha-D-manno-heptose 7-phosphate and D-glycero-beta-D-manno-heptose 7-phosphate from sedoheptulose 7-phosphate: step 1/1. Its function is as follows. Catalyzes the isomerization of sedoheptulose 7-phosphate in D-glycero-D-manno-heptose 7-phosphate. The protein is Phosphoheptose isomerase of Methylibium petroleiphilum (strain ATCC BAA-1232 / LMG 22953 / PM1).